The following is a 385-amino-acid chain: Telomere-binding protein subunit beta (385 aa).

Disordered stretches follow at residues A231–T329 and W343–K385. Over residues G242–A262 the composition is skewed to basic residues. Residues K263–V280 are compositionally biased toward basic and acidic residues. 3 stretches are compositionally biased toward low complexity: residues K295–S304, K312–A326, and G365–S375. The span at K376–K385 shows a compositional bias: basic residues.

As to quaternary structure, heterodimer of an alpha and a beta subunit.

The protein localises to the nucleus. It is found in the chromosome. It localises to the telomere. Functionally, may function as protective capping of the single-stranded telomeric overhang. May also participate in telomere length regulation during DNA replication. Binds specifically to the T4G4-containing extension on the 3'strand and protects this region of the telomere from nuclease digestion and chemical modification. In Sterkiella nova (Ciliate), this protein is Telomere-binding protein subunit beta (MAC-41A).